Here is a 557-residue protein sequence, read N- to C-terminus: Ras-specific guanine nucleotide-releasing factor RalGPS2 (557 aa).

The region spanning 49–287 (TPEEYAGQIT…YKLSLKIEPG (239 aa)) is the Ras-GEF domain. A disordered region spans residues 283-314 (KIEPGTSTPRSAASREDLVGPEVGASPQSGRK). Phosphoserine occurs at positions 293, 296, 308, and 311. Thr-326 is subject to Phosphothreonine. The PXXP signature appears at 327–330 (PPSP). Residues Ser-329 and Ser-343 each carry the phosphoserine modification. Phosphothreonine is present on Thr-361. Residues 368-409 (RHLLDDSVMEPHAPSRGQAESSTLSSGISIGSSDGSELSEET) form a disordered region. A Phosphoserine modification is found at Ser-374. The span at 387-403 (ESSTLSSGISIGSSDGS) shows a compositional bias: low complexity. A PH domain is found at 431-543 (AVTIQGVLRR…WFKHLSAACQ (113 aa)). Positions 433 to 557 (TIQGVLRRKT…QVPTNLMTFE (125 aa)) are required for stimulation of nucleotide exchange by RALA.

Interacts with the SH3 domains of GRB2 and PLCG1. Interacts with RALA.

It is found in the cytoplasm. Its subcellular location is the cell membrane. Functionally, guanine nucleotide exchange factor for the small GTPase RALA. May be involved in cytoskeletal organization. May also be involved in the stimulation of transcription in a Ras-independent fashion. In Macaca fascicularis (Crab-eating macaque), this protein is Ras-specific guanine nucleotide-releasing factor RalGPS2 (RALGPS2).